The following is a 118-amino-acid chain: Beta-2-microglobulin (118 aa).

A signal peptide spans 1 to 20 (MARVVALVLLGLLSLTGLEA). The 87-residue stretch at 25-111 (PKVQVYSRHP…QHSTLKEPLI (87 aa)) folds into the Ig-like C1-type domain. A disulfide bond links Cys45 and Cys99.

This sequence belongs to the beta-2-microglobulin family. Heterodimer of an alpha chain and a beta chain. Beta-2-microglobulin is the beta-chain of major histocompatibility complex class I molecules.

It localises to the secreted. In terms of biological role, component of the class I major histocompatibility complex (MHC). Involved in the presentation of peptide antigens to the immune system. The chain is Beta-2-microglobulin (B2M) from Equus asinus (Donkey).